We begin with the raw amino-acid sequence, 151 residues long: Small ribosomal subunit protein uS15 (151 aa).

The tract at residues methionine 1–arginine 20 is disordered.

The protein belongs to the universal ribosomal protein uS15 family. In terms of assembly, component of the small ribosomal subunit. Part of the small subunit (SSU) processome, composed of more than 70 proteins and the RNA chaperone small nucleolar RNA (snoRNA) U3.

The protein localises to the cytoplasm. The protein resides in the nucleus. It is found in the nucleolus. In terms of biological role, component of the small ribosomal subunit. The ribosome is a large ribonucleoprotein complex responsible for the synthesis of proteins in the cell. Part of the small subunit (SSU) processome, first precursor of the small eukaryotic ribosomal subunit. During the assembly of the SSU processome in the nucleolus, many ribosome biogenesis factors, an RNA chaperone and ribosomal proteins associate with the nascent pre-rRNA and work in concert to generate RNA folding, modifications, rearrangements and cleavage as well as targeted degradation of pre-ribosomal RNA by the RNA exosome. The polypeptide is Small ribosomal subunit protein uS15 (rps13) (Dictyostelium discoideum (Social amoeba)).